The sequence spans 477 residues: Chromosomal replication initiator protein DnaA (477 aa).

A domain I, interacts with DnaA modulators region spans residues 1–87 (MSDRSDPTHA…AGVSNFAIVV (87 aa)). The domain II stretch occupies residues 87–132 (VNPEIAQDAFAQHPEPAAEQPYIETPTITAPTDNPGLPASPSRGDS). The segment at 112 to 131 (PTITAPTDNPGLPASPSRGD) is disordered. Residues 133–349 (RLNPKYGFDT…GTLIRVTAFA (217 aa)) form a domain III, AAA+ region region. 4 residues coordinate ATP: glycine 177, glycine 179, lysine 180, and threonine 181. The segment at 350 to 477 (SLNKTPVDLA…IKQNHRYGKM (128 aa)) is domain IV, binds dsDNA.

It belongs to the DnaA family. Oligomerizes as a right-handed, spiral filament on DNA at oriC.

It localises to the cytoplasm. Functionally, plays an essential role in the initiation and regulation of chromosomal replication. ATP-DnaA binds to the origin of replication (oriC) to initiate formation of the DNA replication initiation complex once per cell cycle. Binds the DnaA box (a 9 base pair repeat at the origin) and separates the double-stranded (ds)DNA. Forms a right-handed helical filament on oriC DNA; dsDNA binds to the exterior of the filament while single-stranded (ss)DNA is stabiized in the filament's interior. The ATP-DnaA-oriC complex binds and stabilizes one strand of the AT-rich DNA unwinding element (DUE), permitting loading of DNA polymerase. After initiation quickly degrades to an ADP-DnaA complex that is not apt for DNA replication. Binds acidic phospholipids. This Clavibacter michiganensis subsp. michiganensis (strain NCPPB 382) protein is Chromosomal replication initiator protein DnaA.